A 60-amino-acid polypeptide reads, in one-letter code: Andropin (60 aa).

Positions 1–23 are cleaved as a signal peptide; the sequence is MKYFVVLVVLALILAIAVGPSDA.

This sequence belongs to the andropin family. In terms of tissue distribution, ejaculatory duct of adult males.

It is found in the secreted. Male-specific peptide with moderate activity against Gram-positive bacteria. The sequence is that of Andropin (Anp) from Drosophila simulans (Fruit fly).